Consider the following 51-residue polypeptide: Insulin (51 aa).

Disulfide bonds link Cys-7-Cys-37, Cys-19-Cys-50, and Cys-36-Cys-41.

Belongs to the insulin family. As to quaternary structure, heterodimer of a B chain and an A chain linked by two disulfide bonds.

Its subcellular location is the secreted. Its function is as follows. Insulin decreases blood glucose concentration. It increases cell permeability to monosaccharides, amino acids and fatty acids. It accelerates glycolysis, the pentose phosphate cycle, and glycogen synthesis in liver. In Balaenoptera borealis (Sei whale), this protein is Insulin (INS).